Here is a 511-residue protein sequence, read N- to C-terminus: ATP synthase subunit beta, mitochondrial (511 aa).

The N-terminal 33 residues, 1–33 (MVLPRLYTATSRAAFKAAKQSAPLLSTSWKRCM), are a transit peptide targeting the mitochondrion. T112 is subject to Phosphothreonine. 190 to 197 (GGAGVGKT) lines the ATP pocket. Position 237 is a phosphothreonine (T237). Residue S373 is modified to Phosphoserine.

It belongs to the ATPase alpha/beta chains family. F-type ATPases have 2 components, CF(1) - the catalytic core - and CF(0) - the membrane proton channel. CF(1) has five subunits: alpha(3), beta(3), gamma(1), delta(1), epsilon(1). CF(0) has three main subunits: a, b and c.

It localises to the mitochondrion. The protein localises to the mitochondrion inner membrane. It catalyses the reaction ATP + H2O + 4 H(+)(in) = ADP + phosphate + 5 H(+)(out). In terms of biological role, mitochondrial membrane ATP synthase (F(1)F(0) ATP synthase or Complex V) produces ATP from ADP in the presence of a proton gradient across the membrane which is generated by electron transport complexes of the respiratory chain. F-type ATPases consist of two structural domains, F(1) - containing the extramembraneous catalytic core, and F(0) - containing the membrane proton channel, linked together by a central stalk and a peripheral stalk. During catalysis, ATP synthesis in the catalytic domain of F(1) is coupled via a rotary mechanism of the central stalk subunits to proton translocation. Subunits alpha and beta form the catalytic core in F(1). Rotation of the central stalk against the surrounding alpha(3)beta(3) subunits leads to hydrolysis of ATP in three separate catalytic sites on the beta subunits. The sequence is that of ATP synthase subunit beta, mitochondrial (ATP2) from Saccharomyces cerevisiae (strain ATCC 204508 / S288c) (Baker's yeast).